The sequence spans 449 residues: UDP-N-acetylmuramoylalanine--D-glutamate ligase (449 aa).

Residue 119–125 (GSNGKTT) participates in ATP binding.

This sequence belongs to the MurCDEF family.

It is found in the cytoplasm. It carries out the reaction UDP-N-acetyl-alpha-D-muramoyl-L-alanine + D-glutamate + ATP = UDP-N-acetyl-alpha-D-muramoyl-L-alanyl-D-glutamate + ADP + phosphate + H(+). The protein operates within cell wall biogenesis; peptidoglycan biosynthesis. Functionally, cell wall formation. Catalyzes the addition of glutamate to the nucleotide precursor UDP-N-acetylmuramoyl-L-alanine (UMA). The sequence is that of UDP-N-acetylmuramoylalanine--D-glutamate ligase from Streptococcus suis (strain 98HAH33).